Here is a 149-residue protein sequence, read N- to C-terminus: Transcriptional repressor NrdR (149 aa).

The segment at 3–34 (CPFCSAVDTKVIDSRLVGEGSQVRRRRQCLVC) is a zinc-finger region. An ATP-cone domain is found at 49 to 139 (PRVIKSNEVR…VYRSFEDIRE (91 aa)).

It belongs to the NrdR family. It depends on Zn(2+) as a cofactor.

Negatively regulates transcription of bacterial ribonucleotide reductase nrd genes and operons by binding to NrdR-boxes. This chain is Transcriptional repressor NrdR, found in Pectobacterium atrosepticum (strain SCRI 1043 / ATCC BAA-672) (Erwinia carotovora subsp. atroseptica).